Here is a 248-residue protein sequence, read N- to C-terminus: MYQNNLIDFNPYSCLSAVEVGKHLYWKIGSLQLHGQVFIVSWLVIAALLTISFLGTRNLQRIPEKFQNFMEFILEFLQDIAKNQIGEHEYRPWVPYIATLFLFILGCNWAGALIPWKLIHLPEGELAAPTNDINTTVALSLLTSLAYFYAGLSKKGLGYFARYVQPTPVLLPINILEDFTKPLSLSFRLFGNVLADELVVSVFTLLIPILIPLPVMILGLFASSIQALIFSTLSAAYIGEAMEGHGEE.

The next 5 helical transmembrane spans lie at 35–55 (GQVFIVSWLVIAALLTISFLG), 94–114 (VPYIATLFLFILGCNWAGALI), 133–153 (INTTVALSLLTSLAYFYAGLS), 202–222 (VFTLLIPILIPLPVMILGLFA), and 224–244 (SIQALIFSTLSAAYIGEAMEG).

It belongs to the ATPase A chain family. In terms of assembly, F-type ATPases have 2 components, CF(1) - the catalytic core - and CF(0) - the membrane proton channel. CF(1) has five subunits: alpha(3), beta(3), gamma(1), delta(1), epsilon(1). CF(0) has four main subunits: a, b, b' and c.

Its subcellular location is the plastid. It localises to the chloroplast thylakoid membrane. Its function is as follows. Key component of the proton channel; it plays a direct role in the translocation of protons across the membrane. The protein is ATP synthase subunit a, chloroplastic of Porphyra purpurea (Red seaweed).